Reading from the N-terminus, the 289-residue chain is Type III pantothenate kinase (289 aa).

9–16 is a binding site for ATP; that stretch reads DAGNSRVK. Substrate contacts are provided by residues Tyr-106 and 113-116; that span reads GSDR. Asp-115 functions as the Proton acceptor in the catalytic mechanism. Residue Thr-139 coordinates ATP. Thr-209 contacts substrate.

It belongs to the type III pantothenate kinase family. In terms of assembly, homodimer. NH4(+) serves as cofactor. K(+) is required as a cofactor.

The protein localises to the cytoplasm. It catalyses the reaction (R)-pantothenate + ATP = (R)-4'-phosphopantothenate + ADP + H(+). Its pathway is cofactor biosynthesis; coenzyme A biosynthesis; CoA from (R)-pantothenate: step 1/5. Its function is as follows. Catalyzes the phosphorylation of pantothenate (Pan), the first step in CoA biosynthesis. The protein is Type III pantothenate kinase of Paraburkholderia phymatum (strain DSM 17167 / CIP 108236 / LMG 21445 / STM815) (Burkholderia phymatum).